Reading from the N-terminus, the 1243-residue chain is DNA polymerase II large subunit (1243 aa).

The protein belongs to the archaeal DNA polymerase II family. In terms of assembly, heterodimer of a large subunit and a small subunit.

It catalyses the reaction DNA(n) + a 2'-deoxyribonucleoside 5'-triphosphate = DNA(n+1) + diphosphate. The enzyme catalyses Exonucleolytic cleavage in the 3'- to 5'-direction to yield nucleoside 5'-phosphates.. Its function is as follows. Possesses two activities: a DNA synthesis (polymerase) and an exonucleolytic activity that degrades single-stranded DNA in the 3'- to 5'-direction. Has a template-primer preference which is characteristic of a replicative DNA polymerase. The polypeptide is DNA polymerase II large subunit (Nanoarchaeum equitans (strain Kin4-M)).